The sequence spans 289 residues: uncharacterized protein (289 aa).

Residues 2–62 enclose the HTH tetR-type domain; sequence NEKKERIIKT…SACEYYIGMS (61 aa). The segment at residues 25 to 44 is a DNA-binding region (H-T-H motif); it reads TIQEIASECGISKGAFYLHF.

This is an uncharacterized protein from Bacillus subtilis (strain 168).